Consider the following 317-residue polypeptide: Acetyl-coenzyme A carboxylase carboxyl transferase subunit alpha (317 aa).

A CoA carboxyltransferase C-terminal domain is found at 40–293 (LEGRVRDAMM…GTVIADALKE (254 aa)).

It belongs to the AccA family. Acetyl-CoA carboxylase is a heterohexamer composed of biotin carboxyl carrier protein (AccB), biotin carboxylase (AccC) and two subunits each of ACCase subunit alpha (AccA) and ACCase subunit beta (AccD).

Its subcellular location is the cytoplasm. It carries out the reaction N(6)-carboxybiotinyl-L-lysyl-[protein] + acetyl-CoA = N(6)-biotinyl-L-lysyl-[protein] + malonyl-CoA. Its pathway is lipid metabolism; malonyl-CoA biosynthesis; malonyl-CoA from acetyl-CoA: step 1/1. Its function is as follows. Component of the acetyl coenzyme A carboxylase (ACC) complex. First, biotin carboxylase catalyzes the carboxylation of biotin on its carrier protein (BCCP) and then the CO(2) group is transferred by the carboxyltransferase to acetyl-CoA to form malonyl-CoA. The sequence is that of Acetyl-coenzyme A carboxylase carboxyl transferase subunit alpha from Sinorhizobium fredii (strain NBRC 101917 / NGR234).